The sequence spans 360 residues: Peptide chain release factor 1 (360 aa).

Gln235 bears the N5-methylglutamine mark.

It belongs to the prokaryotic/mitochondrial release factor family. Post-translationally, methylated by PrmC. Methylation increases the termination efficiency of RF1.

The protein localises to the cytoplasm. Its function is as follows. Peptide chain release factor 1 directs the termination of translation in response to the peptide chain termination codons UAG and UAA. The sequence is that of Peptide chain release factor 1 from Bordetella pertussis (strain Tohama I / ATCC BAA-589 / NCTC 13251).